A 189-amino-acid chain; its full sequence is Protein seele (189 aa).

Positions 1–17 (MLTKALILFGLLALAQG) are cleaved as a signal peptide. Residues 23-176 (REVKCHVCKA…EQASYCDESP (154 aa)) enclose the Saposin B-type domain. 3 cysteine pairs are disulfide-bonded: cysteine 27-cysteine 172, cysteine 30-cysteine 165, and cysteine 85-cysteine 136. The Prevents secretion from ER signature appears at 186-189 (KEEL).

The protein belongs to the canopy family.

The protein localises to the endoplasmic reticulum. Its function is as follows. Involved in embryonic dorsal-ventral patterning which is generated by a series of serine protease processing events where gd processes snk which cleaves ea which then processes spz into the activating ligand for the Toll receptor. Required during this process for the secretion of ea from the developing embryo into the perivitelline space and for ea processing. The chain is Protein seele from Drosophila melanogaster (Fruit fly).